Here is a 355-residue protein sequence, read N- to C-terminus: Peptide chain release factor 1 (355 aa).

The residue at position 232 (Gln-232) is an N5-methylglutamine. The segment at 282–309 (EQNASISAERKSQVGSGDRSERIRTYNY) is disordered. Positions 289 to 305 (AERKSQVGSGDRSERIR) are enriched in basic and acidic residues.

The protein belongs to the prokaryotic/mitochondrial release factor family. In terms of processing, methylated by PrmC. Methylation increases the termination efficiency of RF1.

It localises to the cytoplasm. Its function is as follows. Peptide chain release factor 1 directs the termination of translation in response to the peptide chain termination codons UAG and UAA. The polypeptide is Peptide chain release factor 1 (Desulfatibacillum aliphaticivorans).